The following is a 491-amino-acid chain: Lysosomal Pro-X carboxypeptidase (491 aa).

Positions 1–17 (MGCRALLLLSFLLLGAA) are cleaved as a signal peptide. Residues 18-43 (TTIPPRLKTLGSPHLSASPTPDPAVA) constitute a propeptide that is removed on maturation. Residue asparagine 99 is glycosylated (N-linked (GlcNAc...) asparagine). Serine 177 acts as the Charge relay system in catalysis. Residues 192–332 (HIVVGALAAS…QNIFQALSVY (141 aa)) form an SKS domain region. Disulfide bonds link cysteine 213/cysteine 370, cysteine 231/cysteine 308, cysteine 262/cysteine 341, and cysteine 362/cysteine 392. Asparagine 315, asparagine 334, and asparagine 343 each carry an N-linked (GlcNAc...) asparagine glycan. The N-linked (GlcNAc...) asparagine glycan is linked to asparagine 413. Active-site charge relay system residues include aspartate 428 and histidine 453.

Belongs to the peptidase S28 family. In terms of assembly, homodimer.

Its subcellular location is the lysosome. The enzyme catalyses Cleavage of a -Pro-|-Xaa bond to release a C-terminal amino acid.. Cleaves C-terminal amino acids linked to proline in peptides such as angiotensin II, III and des-Arg9-bradykinin. This cleavage occurs at acidic pH, but enzymatic activity is retained with some substrates at neutral pH. This Mus musculus (Mouse) protein is Lysosomal Pro-X carboxypeptidase (Prcp).